The sequence spans 407 residues: Zinc finger protein 260 (407 aa).

Disordered regions lie at residues 1–21 (MLES…PGES), 39–72 (VEHK…HLRS), and 96–124 (SHQK…RNQR). The C2H2-type 1 zinc finger occupies 23-45 (YECNECKETFSLEQNFVEHKKTH). Basic and acidic residues-rich tracts occupy residues 39-51 (VEHK…EKSP) and 100-111 (QHTEERPSESKK). The C2H2-type 2; degenerate zinc finger occupies 51 to 73 (PECTGCGEESSQASSLTLHLRSR). The C2H2-type 3 zinc finger occupies 79–101 (YKCGECGKAFSQRGNFLSHQKQH). Residues 115–124 (PMTTTVRNQR) are compositionally biased toward polar residues. C2H2-type zinc fingers lie at residues 131-153 (YACK…EKIH), 159-181 (FECS…QNIH), 187-209 (FKCN…QRIH), 215-237 (YECK…QRSH), 243-265 (YTCK…EKIH), 271-293 (YKCN…HNIH), 299-321 (YECN…VRIH), 327-349 (YECK…MRSH), 355-377 (YGCN…MRIH), and 383-405 (YQCS…QRIH).

This sequence belongs to the krueppel C2H2-type zinc-finger protein family. As to quaternary structure, binds DNA. Interacts with GATA4. As to expression, predominantly present in heart. Outside the heart, it is detected in embryonic and postnatal vascular smooth muscle cells and in epithelial cells of the lung, gut and kidney at sites of epithelial morphogenesis and in the spinal cord (at protein level).

It is found in the nucleus. In terms of biological role, transcription factor that acts as a cardiac regulator and an effector of alpha1-adrenergic signaling. Binds to PE response elements (PERE) present in the promoter of genes such as ANF/NPPA and acts as a direct transcriptional activator of NPPA. Also acts as a cofactor with GATA4, a key cardiac regulator. In Mus musculus (Mouse), this protein is Zinc finger protein 260 (Znf260).